A 391-amino-acid chain; its full sequence is Phosphoglycerate kinase (391 aa).

Substrate-binding positions include 21 to 23 (DLN), Arg36, 59 to 62 (HLGR), Arg113, and Arg146. ATP is bound by residues Lys197, Glu319, and 345–348 (GGDT).

This sequence belongs to the phosphoglycerate kinase family. As to quaternary structure, monomer.

The protein resides in the cytoplasm. The catalysed reaction is (2R)-3-phosphoglycerate + ATP = (2R)-3-phospho-glyceroyl phosphate + ADP. The protein operates within carbohydrate degradation; glycolysis; pyruvate from D-glyceraldehyde 3-phosphate: step 2/5. This chain is Phosphoglycerate kinase, found in Shewanella sp. (strain W3-18-1).